The following is a 403-amino-acid chain: Probable tRNA sulfurtransferase (403 aa).

One can recognise a THUMP domain in the interval 61–166 (EAIAESLKDV…SGYSYIMCDE (106 aa)). Residues 184 to 185 (LL), 209 to 210 (HF), R266, G288, and Q297 contribute to the ATP site.

It belongs to the ThiI family.

The protein resides in the cytoplasm. It carries out the reaction [ThiI sulfur-carrier protein]-S-sulfanyl-L-cysteine + a uridine in tRNA + 2 reduced [2Fe-2S]-[ferredoxin] + ATP + H(+) = [ThiI sulfur-carrier protein]-L-cysteine + a 4-thiouridine in tRNA + 2 oxidized [2Fe-2S]-[ferredoxin] + AMP + diphosphate. It catalyses the reaction [ThiS sulfur-carrier protein]-C-terminal Gly-Gly-AMP + S-sulfanyl-L-cysteinyl-[cysteine desulfurase] + AH2 = [ThiS sulfur-carrier protein]-C-terminal-Gly-aminoethanethioate + L-cysteinyl-[cysteine desulfurase] + A + AMP + 2 H(+). It functions in the pathway cofactor biosynthesis; thiamine diphosphate biosynthesis. Functionally, catalyzes the ATP-dependent transfer of a sulfur to tRNA to produce 4-thiouridine in position 8 of tRNAs, which functions as a near-UV photosensor. Also catalyzes the transfer of sulfur to the sulfur carrier protein ThiS, forming ThiS-thiocarboxylate. This is a step in the synthesis of thiazole, in the thiamine biosynthesis pathway. The sulfur is donated as persulfide by IscS. The chain is Probable tRNA sulfurtransferase from Bacillus cytotoxicus (strain DSM 22905 / CIP 110041 / 391-98 / NVH 391-98).